Reading from the N-terminus, the 474-residue chain is Glutamate--tRNA ligase (474 aa).

The 'HIGH' region signature appears at 9 to 19; the sequence is PSPTGLLHMGG. The 'KMSKS' region motif lies at 238 to 242; that stretch reads KLSKR. Lys-241 serves as a coordination point for ATP.

This sequence belongs to the class-I aminoacyl-tRNA synthetase family. Glutamate--tRNA ligase type 1 subfamily. Monomer.

The protein resides in the cytoplasm. The enzyme catalyses tRNA(Glu) + L-glutamate + ATP = L-glutamyl-tRNA(Glu) + AMP + diphosphate. Functionally, catalyzes the attachment of glutamate to tRNA(Glu) in a two-step reaction: glutamate is first activated by ATP to form Glu-AMP and then transferred to the acceptor end of tRNA(Glu). In Buchnera aphidicola subsp. Cinara cedri (strain Cc), this protein is Glutamate--tRNA ligase.